A 205-amino-acid polypeptide reads, in one-letter code: Methylthioribulose-1-phosphate dehydratase (205 aa).

The Zn(2+) site is built by histidine 96 and histidine 98.

This sequence belongs to the aldolase class II family. MtnB subfamily. Zn(2+) serves as cofactor.

The catalysed reaction is 5-(methylsulfanyl)-D-ribulose 1-phosphate = 5-methylsulfanyl-2,3-dioxopentyl phosphate + H2O. It participates in amino-acid biosynthesis; L-methionine biosynthesis via salvage pathway; L-methionine from S-methyl-5-thio-alpha-D-ribose 1-phosphate: step 2/6. Functionally, catalyzes the dehydration of methylthioribulose-1-phosphate (MTRu-1-P) into 2,3-diketo-5-methylthiopentyl-1-phosphate (DK-MTP-1-P). This chain is Methylthioribulose-1-phosphate dehydratase, found in Exiguobacterium sp. (strain ATCC BAA-1283 / AT1b).